Reading from the N-terminus, the 340-residue chain is MAAHIEFRGVTKSFGSGDTPAALDGLDLTIDRGEIFCIIGYSGAGKSTLVRLINALEHPSSGSVVVDGRDLTALRERELCGVRAGIGMIFQQFNLFRSRTVFGNIAYPLKIAGWPADKRKQRVAELLAFVGLTEKAWAYPEQLSGGQKQRVGIARALATNPGILLADEATSSLDPETTADVLALLKRVNAELGVTIVVITHEMEVVRSIADRVAVLEAGRVIETGTVFEVFSNPQTTTARRFVGTVLRNQPGAADVERLRGKHSGRIVSARIQDDGRLGSVLSDAVGRHCVRFEIVYGGISALQGRSFGSLTLELIGEPADVDALIADLRGATEIEEVAA.

In terms of domain architecture, ABC transporter spans 5–243 (IEFRGVTKSF…PQTTTARRFV (239 aa)). 40-47 (GYSGAGKS) contacts ATP.

This sequence belongs to the ABC transporter superfamily. Methionine importer (TC 3.A.1.24) family. As to quaternary structure, the complex is composed of two ATP-binding proteins (MetN), two transmembrane proteins (MetI) and a solute-binding protein (MetQ).

It localises to the cell membrane. The enzyme catalyses L-methionine(out) + ATP + H2O = L-methionine(in) + ADP + phosphate + H(+). The catalysed reaction is D-methionine(out) + ATP + H2O = D-methionine(in) + ADP + phosphate + H(+). Part of the ABC transporter complex MetNIQ involved in methionine import. Responsible for energy coupling to the transport system. This chain is Methionine import ATP-binding protein MetN, found in Leifsonia xyli subsp. xyli (strain CTCB07).